A 199-amino-acid chain; its full sequence is MIVLTEQERRLLSLVQPVAEGLGMEIVRLRVQGGRRPHLQIMAERAGGAPTGIEDCARLSRGMSPVLEAADPISEAYTLEVSTPGIDRPLTRPGDFARWIGHAVRIELARPIDGRRRFTGTITGEDNDGAHIELDDETKLVAAVHEMSRASLVLTDELIEAARVAGNLPPQPEDDEDMLADFEIDESEDEEDPETGDVQ.

The tract at residues 165–199 (AGNLPPQPEDDEDMLADFEIDESEDEEDPETGDVQ) is disordered. Acidic residues predominate over residues 172–199 (PEDDEDMLADFEIDESEDEEDPETGDVQ).

Belongs to the RimP family.

Its subcellular location is the cytoplasm. Its function is as follows. Required for maturation of 30S ribosomal subunits. The polypeptide is Ribosome maturation factor RimP (Hyphomonas neptunium (strain ATCC 15444)).